A 58-amino-acid chain; its full sequence is Photosystem II reaction center protein K (58 aa).

Positions 1–21 (MFDLYLKNLLDLSDSGTVVLA) are excised as a propeptide. The helical transmembrane segment at 29 to 49 (IFDPIVDVLPVIPVFFLLLAF) threads the bilayer.

Belongs to the PsbK family. In terms of assembly, PSII is composed of 1 copy each of membrane proteins PsbA, PsbB, PsbC, PsbD, PsbE, PsbF, PsbH, PsbI, PsbJ, PsbK, PsbL, PsbM, PsbT, PsbX, PsbY, PsbZ, Psb30/Ycf12, at least 3 peripheral proteins of the oxygen-evolving complex and a large number of cofactors. It forms dimeric complexes.

The protein resides in the plastid. It localises to the chloroplast thylakoid membrane. In terms of biological role, one of the components of the core complex of photosystem II (PSII). PSII is a light-driven water:plastoquinone oxidoreductase that uses light energy to abstract electrons from H(2)O, generating O(2) and a proton gradient subsequently used for ATP formation. It consists of a core antenna complex that captures photons, and an electron transfer chain that converts photonic excitation into a charge separation. This Zygnema circumcarinatum (Green alga) protein is Photosystem II reaction center protein K.